The sequence spans 221 residues: Protein N-terminal glutamine amidohydrolase (221 aa).

Serine 2 is subject to N-acetylserine. Residues cysteine 23, histidine 79, and aspartate 97 contribute to the active site.

It belongs to the NTAQ1 family. As to quaternary structure, monomer.

The catalysed reaction is N-terminal L-glutaminyl-[protein] + H2O = N-terminal L-glutamyl-[protein] + NH4(+). In terms of biological role, mediates the side-chain deamidation of N-terminal glutamine residues to glutamate, an important step in N-end rule pathway of protein degradation. Conversion of the resulting N-terminal glutamine to glutamate renders the protein susceptible to arginylation, polyubiquitination and degradation as specified by the N-end rule. Does not act on substrates with internal or C-terminal glutamine and does not act on non-glutamine residues in any position. Involved in immune response. Controls the expression of specific defense-response genes, activates the synthesis pathway for the phytoalexin camalexin, and influences basal resistance to the hemibiotroph pathogen Pseudomonas syringae pv tomato (Pst). In Arabidopsis thaliana (Mouse-ear cress), this protein is Protein N-terminal glutamine amidohydrolase.